We begin with the raw amino-acid sequence, 229 residues long: Cytidylate kinase (229 aa).

12 to 20 (GPSGAGKGT) contacts ATP.

It belongs to the cytidylate kinase family. Type 1 subfamily.

Its subcellular location is the cytoplasm. The catalysed reaction is CMP + ATP = CDP + ADP. It carries out the reaction dCMP + ATP = dCDP + ADP. The sequence is that of Cytidylate kinase from Shewanella frigidimarina (strain NCIMB 400).